We begin with the raw amino-acid sequence, 140 residues long: Nucleoside diphosphate kinase (140 aa).

Positions 10, 58, 86, 92, 103, and 113 each coordinate ATP. His-116 serves as the catalytic Pros-phosphohistidine intermediate.

This sequence belongs to the NDK family. As to quaternary structure, homotetramer. The cofactor is Mg(2+).

The protein resides in the cytoplasm. It carries out the reaction a 2'-deoxyribonucleoside 5'-diphosphate + ATP = a 2'-deoxyribonucleoside 5'-triphosphate + ADP. The enzyme catalyses a ribonucleoside 5'-diphosphate + ATP = a ribonucleoside 5'-triphosphate + ADP. In terms of biological role, major role in the synthesis of nucleoside triphosphates other than ATP. The ATP gamma phosphate is transferred to the NDP beta phosphate via a ping-pong mechanism, using a phosphorylated active-site intermediate. This is Nucleoside diphosphate kinase from Anaplasma phagocytophilum (strain HZ).